We begin with the raw amino-acid sequence, 434 residues long: Glutamyl-tRNA reductase (434 aa).

Substrate contacts are provided by residues 49-52, serine 114, 119-121, and glutamine 125; these read TCNR and EPQ. Catalysis depends on cysteine 50, which acts as the Nucleophile. 199–204 provides a ligand contact to NADP(+); that stretch reads GAGETI.

It belongs to the glutamyl-tRNA reductase family. Homodimer.

The enzyme catalyses (S)-4-amino-5-oxopentanoate + tRNA(Glu) + NADP(+) = L-glutamyl-tRNA(Glu) + NADPH + H(+). Its pathway is porphyrin-containing compound metabolism; protoporphyrin-IX biosynthesis; 5-aminolevulinate from L-glutamyl-tRNA(Glu): step 1/2. In terms of biological role, catalyzes the NADPH-dependent reduction of glutamyl-tRNA(Glu) to glutamate 1-semialdehyde (GSA). The sequence is that of Glutamyl-tRNA reductase from Pasteurella multocida (strain Pm70).